The following is a 492-amino-acid chain: Glutamyl-tRNA(Gln) amidotransferase subunit A (492 aa).

Residues Lys-78 and Ser-158 each act as charge relay system in the active site. Ser-182 (acyl-ester intermediate) is an active-site residue.

It belongs to the amidase family. GatA subfamily. Heterotrimer of A, B and C subunits.

It carries out the reaction L-glutamyl-tRNA(Gln) + L-glutamine + ATP + H2O = L-glutaminyl-tRNA(Gln) + L-glutamate + ADP + phosphate + H(+). Allows the formation of correctly charged Gln-tRNA(Gln) through the transamidation of misacylated Glu-tRNA(Gln) in organisms which lack glutaminyl-tRNA synthetase. The reaction takes place in the presence of glutamine and ATP through an activated gamma-phospho-Glu-tRNA(Gln). This Rickettsia akari (strain Hartford) protein is Glutamyl-tRNA(Gln) amidotransferase subunit A.